We begin with the raw amino-acid sequence, 240 residues long: Uridylate kinase (240 aa).

12–15 (KLSG) is an ATP binding site. Gly-54 is a binding site for UMP. The ATP site is built by Gly-55 and Arg-59. Residues Asp-74 and 135 to 142 (TGNPFFTT) contribute to the UMP site. ATP-binding residues include Thr-162, Tyr-168, and Asp-171.

The protein belongs to the UMP kinase family. As to quaternary structure, homohexamer.

It localises to the cytoplasm. The catalysed reaction is UMP + ATP = UDP + ADP. It participates in pyrimidine metabolism; CTP biosynthesis via de novo pathway; UDP from UMP (UMPK route): step 1/1. With respect to regulation, inhibited by UTP. Its function is as follows. Catalyzes the reversible phosphorylation of UMP to UDP. This chain is Uridylate kinase, found in Xanthomonas euvesicatoria pv. vesicatoria (strain 85-10) (Xanthomonas campestris pv. vesicatoria).